The following is a 385-amino-acid chain: Leucine aminopeptidase 1 (385 aa).

The signal sequence occupies residues 1–20; that stretch reads MKFPSLLSLGVAASTTIVAA. A propeptide spanning residues 21–87 is cleaved from the precursor; the sequence is VPDQKPIGDI…FPKTFAQTTV (67 aa). The N-linked (GlcNAc...) asparagine glycan is linked to Asn-177. Positions 185, 204, 243, and 270 each coordinate Zn(2+). Cys-319 and Cys-323 form a disulfide bridge. Zn(2+) is bound at residue His-352.

This sequence belongs to the peptidase M28 family. M28E subfamily. As to quaternary structure, monomer. Zn(2+) is required as a cofactor.

Its subcellular location is the secreted. In terms of biological role, extracellular aminopeptidase that allows assimilation of proteinaceous substrates. In Ajellomyces capsulatus (strain G186AR / H82 / ATCC MYA-2454 / RMSCC 2432) (Darling's disease fungus), this protein is Leucine aminopeptidase 1 (LAP1).